The sequence spans 313 residues: 4-hydroxy-3-methylbut-2-enyl diphosphate reductase (313 aa).

C13 contributes to the [4Fe-4S] cluster binding site. (2E)-4-hydroxy-3-methylbut-2-enyl diphosphate-binding residues include H41 and H75. Dimethylallyl diphosphate is bound by residues H41 and H75. Isopentenyl diphosphate is bound by residues H41 and H75. C97 serves as a coordination point for [4Fe-4S] cluster. H125 serves as a coordination point for (2E)-4-hydroxy-3-methylbut-2-enyl diphosphate. H125 lines the dimethylallyl diphosphate pocket. An isopentenyl diphosphate-binding site is contributed by H125. The active-site Proton donor is the E127. Residue T168 participates in (2E)-4-hydroxy-3-methylbut-2-enyl diphosphate binding. C218 lines the [4Fe-4S] cluster pocket. 4 residues coordinate (2E)-4-hydroxy-3-methylbut-2-enyl diphosphate: S246, S247, N248, and S295. Residues S246, S247, N248, and S295 each coordinate dimethylallyl diphosphate. 4 residues coordinate isopentenyl diphosphate: S246, S247, N248, and S295.

The protein belongs to the IspH family. It depends on [4Fe-4S] cluster as a cofactor.

It carries out the reaction isopentenyl diphosphate + 2 oxidized [2Fe-2S]-[ferredoxin] + H2O = (2E)-4-hydroxy-3-methylbut-2-enyl diphosphate + 2 reduced [2Fe-2S]-[ferredoxin] + 2 H(+). The enzyme catalyses dimethylallyl diphosphate + 2 oxidized [2Fe-2S]-[ferredoxin] + H2O = (2E)-4-hydroxy-3-methylbut-2-enyl diphosphate + 2 reduced [2Fe-2S]-[ferredoxin] + 2 H(+). It functions in the pathway isoprenoid biosynthesis; dimethylallyl diphosphate biosynthesis; dimethylallyl diphosphate from (2E)-4-hydroxy-3-methylbutenyl diphosphate: step 1/1. Its pathway is isoprenoid biosynthesis; isopentenyl diphosphate biosynthesis via DXP pathway; isopentenyl diphosphate from 1-deoxy-D-xylulose 5-phosphate: step 6/6. Catalyzes the conversion of 1-hydroxy-2-methyl-2-(E)-butenyl 4-diphosphate (HMBPP) into a mixture of isopentenyl diphosphate (IPP) and dimethylallyl diphosphate (DMAPP). Acts in the terminal step of the DOXP/MEP pathway for isoprenoid precursor biosynthesis. This is 4-hydroxy-3-methylbut-2-enyl diphosphate reductase from Chlorobium phaeovibrioides (strain DSM 265 / 1930) (Prosthecochloris vibrioformis (strain DSM 265)).